Reading from the N-terminus, the 254-residue chain is NH(3)-dependent NAD(+) synthetase (254 aa).

29 to 36 (GLSGGIDS) lines the ATP pocket. Asp35 is a Mg(2+) binding site. Deamido-NAD(+) is bound at residue Arg115. Thr135 contacts ATP. A Mg(2+)-binding site is contributed by Glu140. Residues Lys148 and Asp155 each coordinate deamido-NAD(+). ATP contacts are provided by Lys164 and Ser186. 245–246 (HK) serves as a coordination point for deamido-NAD(+).

The protein belongs to the NAD synthetase family. Homodimer.

The catalysed reaction is deamido-NAD(+) + NH4(+) + ATP = AMP + diphosphate + NAD(+) + H(+). Its pathway is cofactor biosynthesis; NAD(+) biosynthesis; NAD(+) from deamido-NAD(+) (ammonia route): step 1/1. Functionally, catalyzes the ATP-dependent amidation of deamido-NAD to form NAD. Uses ammonia as a nitrogen source. The polypeptide is NH(3)-dependent NAD(+) synthetase (Methanococcus aeolicus (strain ATCC BAA-1280 / DSM 17508 / OCM 812 / Nankai-3)).